Consider the following 824-residue polypeptide: Serine/threonine-protein kinase SCH9 (824 aa).

The segment covering Met-1–Pro-23 has biased composition (polar residues). 4 disordered regions span residues Met-1 to Gly-37, Asn-125 to Thr-152, Glu-221 to Pro-272, and Thr-285 to Ile-327. Residues Asn-24–Gly-37 are compositionally biased toward low complexity. One can recognise a C2 domain in the interval Gln-166–His-378. Positions Ile-226–Asn-248 are enriched in low complexity. Composition is skewed to polar residues over residues Glu-249–Pro-272 and His-286–Thr-302. Residues Arg-307–Asn-321 are compositionally biased toward low complexity. Positions Phe-412–Phe-671 constitute a Protein kinase domain. ATP-binding positions include Leu-418–Val-426 and Lys-441. The Proton acceptor role is filled by Asp-538. Thr-570 carries the post-translational modification Phosphothreonine; by PKH1 or PKH2. An AGC-kinase C-terminal domain is found at Ala-672–Val-748. Ser-711 is modified (phosphoserine; by TORC1). Position 723 is a phosphothreonine; by TORC1 (Thr-723). Residue Ser-726 is modified to Phosphoserine; by TORC1. Position 737 is a phosphothreonine; by TORC1 (Thr-737). 2 positions are modified to phosphoserine; by TORC1: Ser-758 and Ser-765.

This sequence belongs to the protein kinase superfamily. AGC Ser/Thr protein kinase family. cAMP subfamily. In terms of processing, phosphorylated by TORC1 in nutrient-replete conditions and during mechanical stress.

The catalysed reaction is L-seryl-[protein] + ATP = O-phospho-L-seryl-[protein] + ADP + H(+). It carries out the reaction L-threonyl-[protein] + ATP = O-phospho-L-threonyl-[protein] + ADP + H(+). Its activity is regulated as follows. Activated by cAMP. In terms of biological role, protein kinase that is part of growth control pathway which is at least partially redundant with the cAMP pathway. Regulates both BCY1 phosphorylation and MPK1 activity. Regulates ribosome biogenesis, translation initiation, and entry into stationary phase in a TORC1-dependent manner. The polypeptide is Serine/threonine-protein kinase SCH9 (SCH9) (Saccharomyces cerevisiae (strain ATCC 204508 / S288c) (Baker's yeast)).